The chain runs to 399 residues: Formate-dependent phosphoribosylglycinamide formyltransferase (399 aa).

N(1)-(5-phospho-beta-D-ribosyl)glycinamide contacts are provided by residues 8–9 (EL) and E68. ATP is bound by residues R100, K141, 146-151 (SSGHGQ), 185-188 (EALA), and E193. The region spanning 105–308 (VLAHEELGLP…EFALHARAIL (204 aa)) is the ATP-grasp domain. Mg(2+) contacts are provided by E266 and E279. N(1)-(5-phospho-beta-D-ribosyl)glycinamide is bound by residues D286, K361, and 368–369 (RR).

This sequence belongs to the PurK/PurT family. As to quaternary structure, homodimer.

The enzyme catalyses N(1)-(5-phospho-beta-D-ribosyl)glycinamide + formate + ATP = N(2)-formyl-N(1)-(5-phospho-beta-D-ribosyl)glycinamide + ADP + phosphate + H(+). It participates in purine metabolism; IMP biosynthesis via de novo pathway; N(2)-formyl-N(1)-(5-phospho-D-ribosyl)glycinamide from N(1)-(5-phospho-D-ribosyl)glycinamide (formate route): step 1/1. In terms of biological role, involved in the de novo purine biosynthesis. Catalyzes the transfer of formate to 5-phospho-ribosyl-glycinamide (GAR), producing 5-phospho-ribosyl-N-formylglycinamide (FGAR). Formate is provided by PurU via hydrolysis of 10-formyl-tetrahydrofolate. The polypeptide is Formate-dependent phosphoribosylglycinamide formyltransferase (Bifidobacterium longum (strain NCC 2705)).